Reading from the N-terminus, the 407-residue chain is Wilms tumor protein homolog B (407 aa).

Glycyl lysine isopeptide (Lys-Gly) (interchain with G-Cter in SUMO) cross-links involve residues K55 and K158. Positions 213 to 221 (MTWNQMNLG) match the 9aaTAD motif. C2H2-type zinc fingers lie at residues 284–308 (FMCA…SRKH), 314–338 (YQCD…QRRH), 344–366 (FQCK…TRTH), and 372–396 (FSCR…HNMH). Important for interaction with target DNA regions lie at residues 328 to 342 (SDQL…TGVK) and 354 to 362 (SRSDHLKTH).

It belongs to the EGR C2H2-type zinc-finger protein family. Expressed in the pronephric anlage from stage 23 to 30. Also expressed in the adult kidney (mesonephros) and in testis.

The protein resides in the nucleus. The protein localises to the cytoplasm. It localises to the nucleus speckle. Functionally, transcription factor required for development of the vascular component of the pronephric kidney, the glomus; may repress tubule-specific gene expression in the portion of the pronephros fated to form the glomus. Recognizes and binds to the DNA sequence 5'-GCG(T/G)GGGCG-3'. Inhibits Wnt-signaling during embryonic development. The protein is Wilms tumor protein homolog B (wt1-b) of Xenopus laevis (African clawed frog).